The sequence spans 622 residues: Prothrombin (622 aa).

The N-terminal stretch at 1-24 is a signal peptide; it reads MAHVRGLQLPGCLALAALCSLVHS. Positions 25 to 43 are excised as a propeptide; sequence QHVFLAPQQARSLLQRVRR. Residues 44-89 enclose the Gla domain; that stretch reads ANTFLEEVRKGNLERECVEETCSYEEAFEALESSTATDVFWAKYTA. E49, E50, E57, E59, E62, E63, E68, E69, E72, and E75 each carry 4-carboxyglutamate. C60 and C65 are disulfide-bonded. Cystine bridges form between C90-C103, C108-C186, C129-C169, C157-C181, C213-C291, C234-C274, C262-C286, C336-C482, C391-C407, C536-C550, and C564-C594. Kringle domains are found at residues 108–186 and 213–291; these read CAEG…IPVC and CVPD…LNYC. N-linked (GlcNAc...) (complex) asparagine glycans are attached at residues N121 and N143. The 255-residue stretch at 364–618 folds into the Peptidase S1 domain; sequence IVEGSDAEIG…LKKWIQKVID (255 aa). The active-site Charge relay system is the H406. N-linked (GlcNAc...) (complex) asparagine glycosylation occurs at N416. The active-site Charge relay system is the D462. The interval 551–573 is high affinity receptor-binding region which is also known as the TP508 peptide; that stretch reads AGYKPDEGKRGDACEGDSGGPFV. S568 functions as the Charge relay system in the catalytic mechanism.

This sequence belongs to the peptidase S1 family. Heterodimer (named alpha-thrombin) of a light and a heavy chain; disulfide-linked. Forms a heterodimer with SERPINA5. In plasma, interacts (via N-terminus) with alpha-1-microglobulin with molar ratio 1:2 and 1:1; this interaction does not prevent the activation of prothrombin to thrombin. Interacts (thrombin) with iripin-8, a serine protease inhibitor from Ixodes ricinus saliva. Interacts (thrombin) with iripin-3, a serine protease inhibitor from Ixodes ricinus saliva. Interacts (thrombin) with Anopheles albimanus salivary thrombin inhibitor anophelin; the interaction results in thrombin inhibition. Interacts (thrombin) with Anopheles gambiae salivary thrombin inhibitor anophelin; the interaction results in thrombin inhibition. Interacts (thrombin) with Amblyomma variegatum variegin; the interaction results in thrombin inhibition. Interacts (thrombin) with Xenopsylla cheopis salivary thrombin inhibitor XC-42. Interacts (thrombin) with Xenopsylla cheopis salivary thrombin inhibitor XC-43. In terms of processing, the gamma-carboxyglutamyl residues, which bind calcium ions, result from the carboxylation of glutamyl residues by a microsomal enzyme, the vitamin K-dependent carboxylase. The modified residues are necessary for the calcium-dependent interaction with a negatively charged phospholipid surface, which is essential for the conversion of prothrombin to thrombin. Post-translationally, N-glycosylated. N-glycan heterogeneity at Asn-121: Hex3HexNAc3 (minor), Hex4HexNAc3 (minor) and Hex5HexNAc4 (major). At Asn-143: Hex4HexNAc3 (minor) and Hex5HexNAc4 (major). In the penultimate step of the coagulation cascade, prothrombin is converted to thrombin by the prothrombinase complex composed of factor Xa (F10), cofactor Va (F5), and phospholipids. This activation requires factor Xa-catalyzed sequential cleavage at 2 sites, Arg-314 and Arg-363, along 2 possible pathways. In the first pathway, the first cleavage occurs at Arg-314, leading to the formation of the inactive intermediate prethrombin-2. This pathway preferentially occurs on platelets and in the absence of cofactor Va. In the second pathway, the first cleavage occurs at Arg-363, which separates protease domain into 2 chains that remain connected through a disulfide bond and generates the active intermediate meizothrombin. The presence of cofactor Va directs activation along the meizothrombin pathway and greatly accelerates the rate of cleavage at Arg-363, but has a smaller effect on the cleavage of meizothrombin at Arg-314. Meizothrombin accumulates as an intermediate when prothrombinase is assembled on the membrane of red blood cells. As to expression, expressed by the liver and secreted in plasma.

The protein resides in the secreted. It is found in the extracellular space. The enzyme catalyses Selective cleavage of Arg-|-Gly bonds in fibrinogen to form fibrin and release fibrinopeptides A and B.. Activity is promoted in the presence of negatively charged surfaces, such as polyphosphate and dextran sulfate. Inhibited by SERPINA5. Its function is as follows. Thrombin, which cleaves bonds after Arg and Lys, converts fibrinogen to fibrin and activates factors V, VII, VIII, XIII, and, in complex with thrombomodulin, protein C. Functions in blood homeostasis, inflammation and wound healing. Activates coagulation factor XI (F11); activation is promoted by the contact with negatively charged surfaces. Triggers the production of pro-inflammatory cytokines, such as MCP-1/CCL2 and IL8/CXCL8, in endothelial cells. The chain is Prothrombin (F2) from Homo sapiens (Human).